The primary structure comprises 290 residues: Metallo-beta-lactamase L1 type 3 (290 aa).

An N-terminal signal peptide occupies residues methionine 1–alanine 21. Residues alanine 22–threonine 33 constitute a propeptide that is removed on maturation. Positions 105, 107, 109, 110, and 181 each coordinate Zn(2+). Aspartate 205 lines the substrate pocket. Cysteines 239 and 267 form a disulfide. Residue histidine 246 participates in Zn(2+) binding.

This sequence belongs to the metallo-beta-lactamase superfamily. Class-B beta-lactamase family. Homotetramer. It depends on Zn(2+) as a cofactor.

The protein resides in the periplasm. The enzyme catalyses a beta-lactam + H2O = a substituted beta-amino acid. With respect to regulation, inhibited by Hg(2+) or Cu(2+), and by chelating agents such as EDTA and O-phenanthroline. Reduced enzymatic activity in presence of cobalt, nickel, cadmium, and manganese. Its function is as follows. Confers resistance to the different beta-lactams antibiotics (penicillin, cephalosporin and carbapenem) via the hydrolysis of the beta-lactam ring. The protein is Metallo-beta-lactamase L1 type 3 of Stenotrophomonas maltophilia (Pseudomonas maltophilia).